Consider the following 670-residue polypeptide: DNA mismatch repair protein MutL (670 aa).

The interval 363–451 (SFDRGRPLSR…RAAGGPASTH (89 aa)) is disordered. A compositionally biased stretch (basic and acidic residues) spans 379-389 (ERWRERHRPDA).

The protein belongs to the DNA mismatch repair MutL/HexB family.

Its function is as follows. This protein is involved in the repair of mismatches in DNA. It is required for dam-dependent methyl-directed DNA mismatch repair. May act as a 'molecular matchmaker', a protein that promotes the formation of a stable complex between two or more DNA-binding proteins in an ATP-dependent manner without itself being part of a final effector complex. The protein is DNA mismatch repair protein MutL of Syntrophobacter fumaroxidans (strain DSM 10017 / MPOB).